A 497-amino-acid polypeptide reads, in one-letter code: Glutamyl-tRNA(Gln) amidotransferase subunit A (497 aa).

Residues K91 and S166 each act as charge relay system in the active site. The tract at residues 143–171 is disordered; that stretch reads SSTENSAYGPTHNPWDLERTAGGSGGGSS. S190 (acyl-ester intermediate) is an active-site residue.

This sequence belongs to the amidase family. GatA subfamily. In terms of assembly, heterotrimer of A, B and C subunits.

The catalysed reaction is L-glutamyl-tRNA(Gln) + L-glutamine + ATP + H2O = L-glutaminyl-tRNA(Gln) + L-glutamate + ADP + phosphate + H(+). In terms of biological role, allows the formation of correctly charged Gln-tRNA(Gln) through the transamidation of misacylated Glu-tRNA(Gln) in organisms which lack glutaminyl-tRNA synthetase. The reaction takes place in the presence of glutamine and ATP through an activated gamma-phospho-Glu-tRNA(Gln). This Corynebacterium glutamicum (strain R) protein is Glutamyl-tRNA(Gln) amidotransferase subunit A.